The primary structure comprises 154 residues: Deoxyuridine 5'-triphosphate nucleotidohydrolase (154 aa).

Substrate contacts are provided by residues 64–66 (RSG), asparagine 77, 81–83 (TVD), and lysine 91.

Belongs to the dUTPase family. As to quaternary structure, homotrimer. Mg(2+) serves as cofactor.

It carries out the reaction dUTP + H2O = dUMP + diphosphate + H(+). Its pathway is pyrimidine metabolism; dUMP biosynthesis; dUMP from dCTP (dUTP route): step 2/2. In terms of biological role, this enzyme is involved in nucleotide metabolism: it produces dUMP, the immediate precursor of thymidine nucleotides and it decreases the intracellular concentration of dUTP so that uracil cannot be incorporated into DNA. The protein is Deoxyuridine 5'-triphosphate nucleotidohydrolase of Mycolicibacterium gilvum (strain PYR-GCK) (Mycobacterium gilvum (strain PYR-GCK)).